A 156-amino-acid chain; its full sequence is ATP synthase subunit b (156 aa).

A helical transmembrane segment spans residues 11 to 31 (AIAFVIFVWFCMKYVWPPLMA).

It belongs to the ATPase B chain family. As to quaternary structure, F-type ATPases have 2 components, F(1) - the catalytic core - and F(0) - the membrane proton channel. F(1) has five subunits: alpha(3), beta(3), gamma(1), delta(1), epsilon(1). F(0) has three main subunits: a(1), b(2) and c(10-14). The alpha and beta chains form an alternating ring which encloses part of the gamma chain. F(1) is attached to F(0) by a central stalk formed by the gamma and epsilon chains, while a peripheral stalk is formed by the delta and b chains.

It localises to the cell inner membrane. F(1)F(0) ATP synthase produces ATP from ADP in the presence of a proton or sodium gradient. F-type ATPases consist of two structural domains, F(1) containing the extramembraneous catalytic core and F(0) containing the membrane proton channel, linked together by a central stalk and a peripheral stalk. During catalysis, ATP synthesis in the catalytic domain of F(1) is coupled via a rotary mechanism of the central stalk subunits to proton translocation. In terms of biological role, component of the F(0) channel, it forms part of the peripheral stalk, linking F(1) to F(0). This chain is ATP synthase subunit b, found in Klebsiella pneumoniae (strain 342).